Here is a 302-residue protein sequence, read N- to C-terminus: Pyridoxal 5'-phosphate synthase subunit PdxS (302 aa).

Aspartate 32 serves as a coordination point for D-ribose 5-phosphate. Lysine 89 acts as the Schiff-base intermediate with D-ribose 5-phosphate in catalysis. Position 161 (glycine 161) interacts with D-ribose 5-phosphate. Arginine 173 contributes to the D-glyceraldehyde 3-phosphate binding site. Residues glycine 222 and 243 to 244 (GS) contribute to the D-ribose 5-phosphate site. Positions 278–302 (GIGKGMKGQSNEDLPDEEKLQGRGV) are disordered.

This sequence belongs to the PdxS/SNZ family. In terms of assembly, in the presence of PdxT, forms a dodecamer of heterodimers.

The catalysed reaction is aldehydo-D-ribose 5-phosphate + D-glyceraldehyde 3-phosphate + L-glutamine = pyridoxal 5'-phosphate + L-glutamate + phosphate + 3 H2O + H(+). It participates in cofactor biosynthesis; pyridoxal 5'-phosphate biosynthesis. Catalyzes the formation of pyridoxal 5'-phosphate from ribose 5-phosphate (RBP), glyceraldehyde 3-phosphate (G3P) and ammonia. The ammonia is provided by the PdxT subunit. Can also use ribulose 5-phosphate and dihydroxyacetone phosphate as substrates, resulting from enzyme-catalyzed isomerization of RBP and G3P, respectively. This Halorubrum lacusprofundi (strain ATCC 49239 / DSM 5036 / JCM 8891 / ACAM 34) protein is Pyridoxal 5'-phosphate synthase subunit PdxS.